The primary structure comprises 95 residues: Protein TusB (95 aa).

It belongs to the DsrH/TusB family. In terms of assembly, heterohexamer, formed by a dimer of trimers. The hexameric TusBCD complex contains 2 copies each of TusB, TusC and TusD. The TusBCD complex interacts with TusE.

The protein resides in the cytoplasm. Functionally, part of a sulfur-relay system required for 2-thiolation of 5-methylaminomethyl-2-thiouridine (mnm(5)s(2)U) at tRNA wobble positions. The polypeptide is Protein TusB (Salmonella dublin (strain CT_02021853)).